Here is a 485-residue protein sequence, read N- to C-terminus: Glutamyl-tRNA(Gln) amidotransferase subunit A (485 aa).

Active-site charge relay system residues include Lys-76 and Ser-151. The Acyl-ester intermediate role is filled by Ser-175.

The protein belongs to the amidase family. GatA subfamily. In terms of assembly, heterotrimer of A, B and C subunits.

It catalyses the reaction L-glutamyl-tRNA(Gln) + L-glutamine + ATP + H2O = L-glutaminyl-tRNA(Gln) + L-glutamate + ADP + phosphate + H(+). In terms of biological role, allows the formation of correctly charged Gln-tRNA(Gln) through the transamidation of misacylated Glu-tRNA(Gln) in organisms which lack glutaminyl-tRNA synthetase. The reaction takes place in the presence of glutamine and ATP through an activated gamma-phospho-Glu-tRNA(Gln). This is Glutamyl-tRNA(Gln) amidotransferase subunit A from Pelagibacter ubique (strain HTCC1062).